The primary structure comprises 700 residues: MSDQQNQDQGQGQGYNQYNQYGQYNQYYNQQGYQGYNGQQGAPQGYQAYQAYGQQPQGAYQGYNPQQAQGYQPYQGYNAQQQGYNAQQGGHNNNYNKNYNNKNSYNNYNKQGYQGAQGYNAQQPTGYAAPAQSSSQGMTLKDFQNQQGSTNAAKPKPKLKLASSSGIKLVGAKKPVAPKTEKTDESKEATKTTDDNEEAQSELPKIDDLKISEAEKPKTKENTPSADDTSSEKTTSAKADTSTGGANSVDALIKEQEDEVDEEVVKDMFGGKDHVSIIFMGHVDAGKSTMGGNLLYLTGSVDKRTVEKYEREAKEAGRQGWYLSWVMDTNKEERNDGKTIEVGRAYFETEKRRYTILDAPGHKMYVSEMIGGASQADIGILVISARKGEYETGFEKGGQTREHALLAKTQGVNKMIVVINKMDDPTVGWDKERYDHCVGNLTNFLKAVGYNVKEDVIFMPVSGYTGAGLKERVDPKDCPWYTGPSLLEYLDNMKTTDRHINAPFMLPIASKMKDMGTVVEGKIESGHIRKGNQTLLMPNRTSVEILTIYNETESEVDMAVCGEQVRLRIKGVEEEEISAGFVLTSPKNPVKNVTRFVAQIAIVELKSIMSAGFSCVMHIHTAIEEVTVTRLLHKLEKGSNRKSKKPPAFAKKGMKIIAVIETNEPVCVETYDDYPQLGRFTLRDQGTTIAIGKIVKILEN.

A several sort of repeats region spans residues 10–136 (GQGQGYNQYN…YAAPAQSSSQ (127 aa)). Over residues 114–123 (QGAQGYNAQQ) the composition is skewed to low complexity. The tract at residues 114–250 (QGAQGYNAQQ…TSTGGANSVD (137 aa)) is disordered. A compositionally biased stretch (polar residues) spans 131-151 (AQSSSQGMTLKDFQNQQGSTN). Residues 137 to 267 (GMTLKDFQNQ…DEVDEEVVKD (131 aa)) are charged. 2 stretches are compositionally biased toward basic and acidic residues: residues 179 to 194 (KTEKTDESKEATKTTD) and 204 to 221 (PKIDDLKISEAEKPKTKE). Residues 222–246 (NTPSADDTSSEKTTSAKADTSTGGA) show a composition bias toward polar residues. The 227-residue stretch at 272-498 (KDHVSIIFMG…YLDNMKTTDR (227 aa)) folds into the tr-type G domain. Residues 281-288 (GHVDAGKS) are G1. Residue 281–288 (GHVDAGKS) coordinates GTP. The G2 stretch occupies residues 337–341 (GKTIE). Position 355 is a phosphothreonine (threonine 355). Residues 358–361 (DAPG) are G3. GTP is bound by residues 358–362 (DAPGH) and 420–423 (NKMD). The tract at residues 420–423 (NKMD) is G4. Residues 462–464 (SGY) are G5.

This sequence belongs to the TRAFAC class translation factor GTPase superfamily. Classic translation factor GTPase family. ERF3 subfamily.

It localises to the cytoplasm. Involved in translation termination. Stimulates the activity of ERF1. Binds guanine nucleotides. This is Eukaryotic peptide chain release factor GTP-binding subunit (SUP35) from Kluyveromyces lactis (strain ATCC 8585 / CBS 2359 / DSM 70799 / NBRC 1267 / NRRL Y-1140 / WM37) (Yeast).